The sequence spans 368 residues: DNA replication and repair protein RecF (368 aa).

An ATP-binding site is contributed by 30 to 37 (GRNGSGKT).

Belongs to the RecF family.

It is found in the cytoplasm. Functionally, the RecF protein is involved in DNA metabolism; it is required for DNA replication and normal SOS inducibility. RecF binds preferentially to single-stranded, linear DNA. It also seems to bind ATP. This Chlorobaculum parvum (strain DSM 263 / NCIMB 8327) (Chlorobium vibrioforme subsp. thiosulfatophilum) protein is DNA replication and repair protein RecF.